A 361-amino-acid chain; its full sequence is MLRQGIAAQKKSFATLAAEQLLPKKYGGRYTVTLIPGDGVGKEVTDSVVKIFENENIPIDWETIDISGLENTENVQRAVESLKRNKVGLKGIWHTPADQTGHGSLNVALRKQLDIFANVALFKSIPGVKTRLNNIDMVIIRENTEGEYSGLEHESVPGVVESLKIMTRAKSERIARFAFDFALKNNRKSVCAVHKANIMKLGDGLFRNTVNEIGANEYPELDVKNIIVDNASMQAVAKPHQFDVLVTPNLYGSILGNIGSALIGGPGLVPGANFGREYAVFEPGSRHVGLDIKGQNVANPTAMILSSTLMLRHLGLNAYADRISKATYDVISEGKSTTRDIGGSASTSEFTNAVIEKLAKL.

The transit peptide at 1-12 (MLRQGIAAQKKS) directs the protein to the mitochondrion. Positions 110, 141, and 229 each coordinate substrate. Aspartate 229 lines the Mg(2+) pocket.

It belongs to the isocitrate and isopropylmalate dehydrogenases family. In terms of assembly, octamer of two non-identical subunits IDH1 and IDH2. Mg(2+) serves as cofactor. Requires Mn(2+) as cofactor.

It is found in the mitochondrion. The catalysed reaction is D-threo-isocitrate + NAD(+) = 2-oxoglutarate + CO2 + NADH. In terms of biological role, performs an essential role in the oxidative function of the citric acid cycle. This chain is Isocitrate dehydrogenase [NAD] subunit 1, mitochondrial (IDH1), found in Kluyveromyces lactis (strain ATCC 8585 / CBS 2359 / DSM 70799 / NBRC 1267 / NRRL Y-1140 / WM37) (Yeast).